We begin with the raw amino-acid sequence, 309 residues long: MTDTTTTTTTDANKLVLEKSANSSGLEVDLHPLVLINISDHFTRTKVQSNYQDNCRVIGVILGVQNGRNVEICNSFEMVYATVDKQLVLDIEYLRKKYEQLFPLYDLLGWYSTGSQVSKDDILLHKQISEHNESPLYLMLDTDSPKSKDLPVIIYESELHIVNDEPTTIFVKTPYKIQTGEAERIGVNHIAKVTPSGSEGSGLTSHLFTMHNAISMLNIRVKALSDYLQAVKEKRLPYEQNILRKASSLCNQLPTIDTHDFKKSYLQEYNDVLLVTYLASITKTSASLNDTIDKYLVSNEKQSKRRFYQ.

One can recognise an MPN domain in the interval 28-161 (VDLHPLVLIN…VIIYESELHI (134 aa)).

This sequence belongs to the peptidase M67A family. CSN6 subfamily. As to quaternary structure, component of the CSN complex. The holocomplex is comprised of 8 subunits csn1-8. In the complex, it probably interacts directly with csn2, csn5 and csn7.

The protein localises to the cytoplasm. It is found in the nucleus. It localises to the cytoplasmic vesicle. Its subcellular location is the phagosome. Component of the COP9 signalosome complex (CSN), a complex involved in various cellular and developmental processes. The CSN complex is an essential regulator of the ubiquitin (Ubl) conjugation pathway by mediating the deneddylation of the cullin subunits of E3 ligase complexes, leading to modify the Ubl ligase activity. The polypeptide is COP9 signalosome complex subunit 6 (csn6) (Dictyostelium discoideum (Social amoeba)).